The following is a 314-amino-acid chain: Oxidoreductase poxI (314 aa).

This sequence belongs to the NmrA-type oxidoreductase family. Isoflavone reductase subfamily.

Its pathway is secondary metabolite biosynthesis. In terms of biological role, oxidoreductase; part of the gene cluster that mediates the biosynthesis of oxaleimides, cytotoxic compounds containing an unusual disubstituted succinimide moiety. The first step of the pathway is provided by the HR-PKS poxF that serves in a new mode of collaborative biosynthesis with the PKS-NRPS poxE, by providing the olefin containing amino acid substrate via the synthesis of an ACP-bound dec-4-enoate. The cytochrome P450 monooxygenase poxM-catalyzed oxidation at the alpha-position creates the enzyme-bound 2-hydroxydec-4-enoyl-ACP thioester, which may be prone to spontaneous hydrolysis to yield 2-hydroxydec-4-enoic acid due to increased electrophilicity of the carbonyl. 2-hydroxydec-4-enoic acid can then be further oxidized by poxM to yield the alpha-ketoacid 2-oxodec-4-enoicacid, which is reductively aminated by the aminotransferase poxL to yield (S,E)-2-aminodec-4-enoic acid. The Hybrid PKS-NRPS synthetase poxE then performs condensation between the octaketide product of its PKS modules and the amino group of (S,E)-2-aminodec-4-enoic acid which is activated and incorporated by the adenylation domain. The resulting aminoacyl product can be cyclized by the Diels-Alderase PoxQ and reductively released by the reductive (R) domain of poxE to yield an aldehyde intermediate. The released aldehyde is then substrate for a Knoevenagel condensation by the hydrolyase poxO followed by an oxidation at the 5-position of the pyrrolidone ring. The presence of the olefin from the amino acid building block allows for migration of the substituted allyl group to occur. This allylic transposition reaction takes place in a conjugate addition, semipinacol-like fashion to yield a succinimide intermediate. Iterative two-electron oxidations of the C7 methyl of the succinimide intermediate to the carboxylic acid can be catalyzed by one of two remaining cytochrome P450 monooxygenasess poxC or poxD to yield oxaleimide A. Subsequent oxidation yields the maleimide scaffold oxaleimide I. Both oxaleimide A and oxaleimide I can undergo oxidative modifications in the decalin ring to yield the series of products oxaleimides B to H. The sequence is that of Oxidoreductase poxI from Penicillium oxalicum (strain 114-2 / CGMCC 5302) (Penicillium decumbens).